The chain runs to 355 residues: LIM/homeobox protein lim-4 (355 aa).

LIM zinc-binding domains follow at residues 96-155 (VICT…THVT) and 166-228 (PKCA…LVEG). The homeobox DNA-binding region spans 239–298 (TKRVRTTFAEDQLSVLQTYFNRDSNPDGADLEKIASMTGLSKRVTQVWFQNSRARQKKWH). The tract at residues 291–336 (RARQKKWHQKSEGDNGDSQRSSVGPSSPSQKSDSSSEMMYPTSVTT) is disordered. Residues 306–326 (GDSQRSSVGPSSPSQKSDSSS) show a composition bias toward low complexity.

In terms of assembly, interacts with transcription factor sox-2. Expressed in the AWB sensory neurons and in one RME motor neuron (RMEV), two RMD motor neurons (RMDL and RMDR), the RID, RIV, SAA and SIA interneurons and the SMB sensory/inter/motor neurons.

Its subcellular location is the nucleus. Transcription factor that binds to the promoter of target genes. Regulates genes involved in serotonin synthesis and release in serotonergic ADF neurons. Involved in specification of neuron cell fate, olfactory receptor expression, locomotion, and foraging behavior. Required in AWB olfactory neurons to repress AWC cell fate and promote the AWB cell fate during early development. Cooperates with additional factors to direct the differentiation of the olfactory neurons, functioning with the transcription factor sox-2 to suppress AWC terminal differentiation and promote AWB neuron differentiation. Involved in regulating terminal specification and maintenance of the SMB sensory/inter/motor neurons. Plays a role in regulation of RID motor neuron differentiation, but is dispensable for motor axon outgrowth in the dorsal nerve cord. May regulate its own expression. The polypeptide is LIM/homeobox protein lim-4 (Caenorhabditis elegans).